The sequence spans 468 residues: ATP-dependent protease ATPase subunit HslU (468 aa).

ATP is bound by residues Val-22 and 64–69 (GVGKTE). The tract at residues 166–187 (FGNNDEEDEEPPTEDIKTKRSE) is disordered. A compositionally biased stretch (acidic residues) spans 169–178 (NDEEDEEPPT). 3 residues coordinate ATP: Asp-281, Glu-346, and Arg-418.

The protein belongs to the ClpX chaperone family. HslU subfamily. As to quaternary structure, a double ring-shaped homohexamer of HslV is capped on each side by a ring-shaped HslU homohexamer. The assembly of the HslU/HslV complex is dependent on binding of ATP.

The protein localises to the cytoplasm. ATPase subunit of a proteasome-like degradation complex; this subunit has chaperone activity. The binding of ATP and its subsequent hydrolysis by HslU are essential for unfolding of protein substrates subsequently hydrolyzed by HslV. HslU recognizes the N-terminal part of its protein substrates and unfolds these before they are guided to HslV for hydrolysis. The protein is ATP-dependent protease ATPase subunit HslU of Staphylococcus carnosus (strain TM300).